A 772-amino-acid chain; its full sequence is Bromo adjacent homology domain-containing 1 protein (772 aa).

Disordered stretches follow at residues 1–63 (MTHT…RSLV) and 77–117 (LENV…PRKR). S8 bears the Phosphoserine mark. The segment covering 49 to 61 (TGRRKNYPLRKRS) has biased composition (basic residues). S101 and S121 each carry phosphoserine. Disordered regions lie at residues 131 to 357 (LLER…PADY), 521 to 582 (QTVA…RTNG), and 723 to 743 (PSRK…PHRT). 3 stretches are compositionally biased toward basic and acidic residues: residues 147 to 158 (RGGDPHRSRDRA), 170 to 182 (RLGD…RDLS), and 189 to 199 (EGARRDGDPAP). Position 182 is a phosphoserine (S182). Position 204 is a phosphoserine (S204). Positions 280-289 (SAPPHGPPTQ) are enriched in pro residues. A compositionally biased stretch (low complexity) spans 299–310 (LENPLRPNLPLL). Positions 340–352 (FPAPQLSPLPMPG) are enriched in pro residues. Residues 536–548 (GSKSGLRTGSSCR) show a composition bias toward polar residues. Positions 549 to 580 (HTVRSKAARRPSHPKQPRAQRPRPRRRRRRRT) are enriched in basic residues. Position 580 is a phosphothreonine (T580). Residues 616–771 (ETIRVRDTVL…FRHGRILKNP (156 aa)) form the BAH domain.

Interacts with CBX5 (HP1 alpha), HDAC5, MBD1 and SP1. In terms of processing, ubiquitinated in a FBXO11-dependent manner; leading to degradation.

The protein localises to the nucleus. Its subcellular location is the chromosome. Functionally, heterochromatin protein that acts as a transcription repressor and has the ability to promote the formation of large heterochromatic domains. May act by recruiting heterochromatin proteins such as CBX5 (HP1 alpha), HDAC5 and MBD1. Represses IGF2 expression by binding to its CpG-rich P3 promoter and recruiting heterochromatin proteins. This Mus musculus (Mouse) protein is Bromo adjacent homology domain-containing 1 protein (Bahd1).